A 437-amino-acid polypeptide reads, in one-letter code: UDP-N-acetylmuramoylalanine--D-glutamate ligase (437 aa).

112–118 (GSNGKST) contacts ATP.

The protein belongs to the MurCDEF family.

It localises to the cytoplasm. The catalysed reaction is UDP-N-acetyl-alpha-D-muramoyl-L-alanine + D-glutamate + ATP = UDP-N-acetyl-alpha-D-muramoyl-L-alanyl-D-glutamate + ADP + phosphate + H(+). It participates in cell wall biogenesis; peptidoglycan biosynthesis. In terms of biological role, cell wall formation. Catalyzes the addition of glutamate to the nucleotide precursor UDP-N-acetylmuramoyl-L-alanine (UMA). The chain is UDP-N-acetylmuramoylalanine--D-glutamate ligase from Haemophilus influenzae (strain PittEE).